A 159-amino-acid polypeptide reads, in one-letter code: Aspartate carbamoyltransferase regulatory chain (159 aa).

Zn(2+)-binding residues include Cys113, Cys118, Cys143, and Cys146.

The protein belongs to the PyrI family. Contains catalytic and regulatory chains. It depends on Zn(2+) as a cofactor.

Functionally, involved in allosteric regulation of aspartate carbamoyltransferase. The protein is Aspartate carbamoyltransferase regulatory chain of Methanococcoides burtonii (strain DSM 6242 / NBRC 107633 / OCM 468 / ACE-M).